The chain runs to 224 residues: Mammalian ependymin-related protein 1 (224 aa).

An N-terminal signal peptide occupies residues 1–37 (MLTRAPRRLVQGPRETWLLGGLWVWILCGLGMAGSPG). Disulfide bonds link cysteine 42–cysteine 172, cysteine 88–cysteine 222, and cysteine 113–cysteine 210. N-linked (GlcNAc...) asparagine glycans are attached at residues asparagine 130 and asparagine 182.

The protein belongs to the ependymin family. As to quaternary structure, homodimer. Post-translationally, N-glycosylated; the glycan contains mannose-6-phosphate moieties. Detected in brain (at protein level).

The protein resides in the lysosome lumen. It localises to the secreted. Binds anionic lipids and gangliosides at acidic pH. This Rattus norvegicus (Rat) protein is Mammalian ependymin-related protein 1 (Epdr1).